Here is a 251-residue protein sequence, read N- to C-terminus: Ly6/PLAUR domain-containing protein 5 (251 aa).

The signal sequence occupies residues 1–25; that stretch reads MAMGVPRVILLCLFGAALCLTGSQA. N-linked (GlcNAc...) asparagine glycans are attached at residues Asn-120 and Asn-174. Positions 135–214 constitute a UPAR/Ly6 domain; the sequence is CYACIGVHQD…GSCCEGYLCN (80 aa). Ala-225 carries GPI-anchor amidated alanine lipidation. The propeptide at 226-251 is removed in mature form; the sequence is SATTPPRALQVLALLLPVLLLVGLSA.

It is found in the cell membrane. This is Ly6/PLAUR domain-containing protein 5 (LYPD5) from Homo sapiens (Human).